The following is a 128-amino-acid chain: S-adenosylmethionine decarboxylase proenzyme (128 aa).

Ser-61 serves as the catalytic Schiff-base intermediate with substrate; via pyruvic acid. Ser-61 carries the pyruvic acid (Ser); by autocatalysis modification. Catalysis depends on His-66, which acts as the Proton acceptor; for processing activity. Residue Cys-81 is the Proton donor; for catalytic activity of the active site.

It belongs to the prokaryotic AdoMetDC family. Type 1 subfamily. In terms of assembly, heterotetramer of two alpha and two beta chains arranged as a dimer of alpha/beta heterodimers. The cofactor is pyruvate. In terms of processing, is synthesized initially as an inactive proenzyme. Formation of the active enzyme involves a self-maturation process in which the active site pyruvoyl group is generated from an internal serine residue via an autocatalytic post-translational modification. Two non-identical subunits are generated from the proenzyme in this reaction, and the pyruvate is formed at the N-terminus of the alpha chain, which is derived from the carboxyl end of the proenzyme. The post-translation cleavage follows an unusual pathway, termed non-hydrolytic serinolysis, in which the side chain hydroxyl group of the serine supplies its oxygen atom to form the C-terminus of the beta chain, while the remainder of the serine residue undergoes an oxidative deamination to produce ammonia and the pyruvoyl group blocking the N-terminus of the alpha chain.

It catalyses the reaction S-adenosyl-L-methionine + H(+) = S-adenosyl 3-(methylsulfanyl)propylamine + CO2. It functions in the pathway amine and polyamine biosynthesis; S-adenosylmethioninamine biosynthesis; S-adenosylmethioninamine from S-adenosyl-L-methionine: step 1/1. Its function is as follows. Catalyzes the decarboxylation of S-adenosylmethionine to S-adenosylmethioninamine (dcAdoMet), the propylamine donor required for the synthesis of the polyamines spermine and spermidine from the diamine putrescine. This is S-adenosylmethionine decarboxylase proenzyme from Synechococcus sp. (strain WH7803).